We begin with the raw amino-acid sequence, 1282 residues long: Protein PIR (1282 aa).

In terms of assembly, binds NAP1 and ROP2, but not ROP8. Expressed in roots, root hairs, hypocotyls, cotyledons, stems, leaves, trichomes and flowers.

Its function is as follows. Involved in regulation of actin and microtubule organization. Part of a WAVE complex that activates the ARP2/3 complex. Interacts with the active form of RHO-family GTPases. In Arabidopsis thaliana (Mouse-ear cress), this protein is Protein PIR (PIR).